A 603-amino-acid polypeptide reads, in one-letter code: MAANEDRDDAAAILNWEGTSEIKSANEYSRNLLFSVLDSLDGNKTIVWDRDRSVMHRVNLFAGASVLAAHGVVANHSIETKKSASTPHVVFFLAPTMVSLDLLCDYIDNVRNDSKILYQVFFIPEAWFVVRESLKTRAEGKYWERLESVKEIPLCWLPRDGECLSLSSPQIAARLLINGDWTHLHKCAVALNQLIDMCRGRSSSSNQRPMSIYAKGKWASDVAKMMGKIRNSAEADSMTKNLDPIEGLLKINRIVLIDRWMDPLTPMLSQLTFYGLLDEIYGIGMVNSVKVPEMEFKNEKDGDPFQEKEVYLIDEVYHRLKHSHINAVSIEASKVLAEIRDDEQFDRDKMSVAEYSVLVKKMPKIINRKKMIEVHMRLAEMIQSHVYCKQSDSIKLERDLLEYSDSDKAIPLIEDLIFDASPLNAVLRLISVHSLTCGGLKPSVLQHYRRIVNQSYGSSALNKVLKMQKMGLIREKGGGGKMQCEYAQMMFQQMKKNHDMLPEEFSEAKLDDMAYAYSGFSPLLCKMLEEGDRVKWVGWPKTVIGDKSDLIAERDGRGTCVFVIGGLTRSELAIIRENLPNVALITTSALITGDKLLNNITNI.

The protein belongs to the STXBP/unc-18/SEC1 family. As to quaternary structure, probable component of the homotypic fusion and vacuole protein sorting (HOPS) complex consisting of the core class C Vps proteins vps-11, vps-16, vps-18, and which further associates with vps-33.1, vps-39 and vps-41. Interacts with spe-39. Ubiquitously expressed at high levels in somatic tissues including the pharynx, muscles, hypodermis, neurons, coelomocytes and spermatheca. Expressed in the intestine.

It localises to the lysosome. It is found in the early endosome. The protein resides in the late endosome. Its subcellular location is the apical cell membrane. Its function is as follows. Plays a role in vesicle-mediated protein trafficking to lysosomal compartments including the endocytic membrane transport pathways. Believed to act as a component of the putative HOPS endosomal tethering complex which is proposed to be involved in the rab-5-to-rab-7 endosome conversion probably implicating sand-1, and via binding SNAREs and SNARE complexes to mediate tethering and docking events during SNARE-mediated membrane fusion. The HOPS complex is proposed to be recruited to rab-7 on the late endosomal membrane and to regulate late endocytic, phagocytic and autophagic traffic towards lysosomes. Within the HOPS complex, contributes to the normal development of gut granules in embryonic and adult intestinal cells. Required for endosome/lysosome fusion. Required for early embryonic development. The protein is Vacuolar protein sorting-associated protein 33A of Caenorhabditis elegans.